Reading from the N-terminus, the 631-residue chain is tRNA uridine 5-carboxymethylaminomethyl modification enzyme MnmG (631 aa).

Position 14-19 (14-19 (GGGHAG)) interacts with FAD. Position 274–288 (274–288 (GPRYCPSIEDKIHRF)) interacts with NAD(+).

This sequence belongs to the MnmG family. In terms of assembly, homodimer. Heterotetramer of two MnmE and two MnmG subunits. It depends on FAD as a cofactor.

The protein localises to the cytoplasm. NAD-binding protein involved in the addition of a carboxymethylaminomethyl (cmnm) group at the wobble position (U34) of certain tRNAs, forming tRNA-cmnm(5)s(2)U34. The protein is tRNA uridine 5-carboxymethylaminomethyl modification enzyme MnmG of Pseudomonas paraeruginosa (strain DSM 24068 / PA7) (Pseudomonas aeruginosa (strain PA7)).